A 283-amino-acid polypeptide reads, in one-letter code: Glutamate racemase (283 aa).

Residues 28–29 and 60–61 contribute to the substrate site; these read DS and YG. Residue Cys92 is the Proton donor/acceptor of the active site. 93–94 is a substrate binding site; it reads NS. Cys204 acts as the Proton donor/acceptor in catalysis. 205–206 contributes to the substrate binding site; the sequence is TH.

The protein belongs to the aspartate/glutamate racemases family.

It catalyses the reaction L-glutamate = D-glutamate. Its pathway is cell wall biogenesis; peptidoglycan biosynthesis. Provides the (R)-glutamate required for cell wall biosynthesis. This is Glutamate racemase from Erwinia tasmaniensis (strain DSM 17950 / CFBP 7177 / CIP 109463 / NCPPB 4357 / Et1/99).